Reading from the N-terminus, the 87-residue chain is Small ribosomal subunit protein bS20 (87 aa).

Positions 1-20 are disordered; it reads MANHKSAEKRARQTIKRTER.

This sequence belongs to the bacterial ribosomal protein bS20 family.

Binds directly to 16S ribosomal RNA. The sequence is that of Small ribosomal subunit protein bS20 from Campylobacter lari (strain RM2100 / D67 / ATCC BAA-1060).